The chain runs to 228 residues: MLHVEMLTLLFLVLWMCVFSQDPGSKVVADRYAVYWNSSNPRFQRGDYHIDVCINDYLDVFCPHYEDSVPEDKTERYVLYMVNFDGYSACDHTSKGFKRWECNRPHSPNGPLKFSEKFQLFTPFSLGFEFRPGREYFYISSAIPDNGRRSCLKLKVFVRPTNSCMKTIGVHDRVFDVNDKVENSLEPADDTVHESAEPSRGENAAQTPRIPSRLLAILLFLLAMLLTL.

Positions 1–20 are cleaved as a signal peptide; it reads MLHVEMLTLLFLVLWMCVFS. Positions 29 to 162 constitute an Ephrin RBD domain; sequence ADRYAVYWNS…KLKVFVRPTN (134 aa). N-linked (GlcNAc...) asparagine glycosylation occurs at asparagine 37. Intrachain disulfides connect cysteine 62–cysteine 102 and cysteine 90–cysteine 151. A glycan (N-linked (GlcNAc...) asparagine; atypical) is linked at asparagine 162. Residues 186-205 form a disordered region; it reads EPADDTVHESAEPSRGENAA. The span at 190-200 shows a compositional bias: basic and acidic residues; that stretch reads DTVHESAEPSR. The GPI-anchor amidated asparagine moiety is linked to residue asparagine 203. The propeptide at 204-228 is removed in mature form; it reads AAQTPRIPSRLLAILLFLLAMLLTL.

It belongs to the ephrin family. Binds to the receptor tyrosine kinases EPHA2, EPHA3 and EPHB1. Forms a ternary EFNA5-EPHA3-ADAM10 complex mediating EFNA5 extracellular domain shedding by ADAM10 which regulates the EFNA5-EPHA3 complex internalization and function. Binds to EPHB2. Interacts with EPHA8; activates EPHA8. Expressed in myogenic progenitor cells.

The protein resides in the cell membrane. Its subcellular location is the membrane. The protein localises to the caveola. In terms of biological role, cell surface GPI-bound ligand for Eph receptors, a family of receptor tyrosine kinases which are crucial for migration, repulsion and adhesion during neuronal, vascular and epithelial development. Binds promiscuously Eph receptors residing on adjacent cells, leading to contact-dependent bidirectional signaling into neighboring cells. The signaling pathway downstream of the receptor is referred to as forward signaling while the signaling pathway downstream of the ephrin ligand is referred to as reverse signaling. Induces compartmentalized signaling within a caveolae-like membrane microdomain when bound to the extracellular domain of its cognate receptor. This signaling event requires the activity of the Fyn tyrosine kinase. Activates the EPHA3 receptor to regulate cell-cell adhesion and cytoskeletal organization. With the receptor EPHA2 may regulate lens fiber cells shape and interactions and be important for lens transparency maintenance. May function actively to stimulate axon fasciculation. The interaction of EFNA5 with EPHA5 also mediates communication between pancreatic islet cells to regulate glucose-stimulated insulin secretion. Cognate/functional ligand for EPHA7, their interaction regulates brain development modulating cell-cell adhesion and repulsion. The chain is Ephrin-A5 (Efna5) from Mus musculus (Mouse).